We begin with the raw amino-acid sequence, 341 residues long: MKALSKLKAEEGIWMTDVPEPEVGHNDLLIKIRKTAICGTDVHIYNWDEWSQKTIPVPMVVGHEYVGEVVGIGQEVKGFNIGDRVSGEGHITCGHCRNCRGGRTHLCRNTTGVGVNRPGCFAEYLVIPAFNAFKIPDNISDDLASIFDPFGNAVHTALSFDLVGEDVLVSGAGPIGVMAAAVAKHVGARHVVITDVNEYRLELARKMGVTRAVNVAKESLTDVMAELGMTEGFDVGLEMSGAPPAFRTMLDTMNHGGRIAMLGIPPADMSIDWTKVIFKGLFIKGIYGREMFETWYKMAALIQSGLDLSPIITHRFSIDDFQKGFDAMRSGQSGKVILSWD.

Zn(2+) is bound at residue C38. Active-site charge relay system residues include T40 and H43. Residues H63, E64, C93, C96, C99, and C107 each coordinate Zn(2+). NAD(+)-binding positions include I175, D195, R200, L262–I264, and I286–Y287.

Belongs to the zinc-containing alcohol dehydrogenase family. Homotetramer. Zn(2+) is required as a cofactor.

It is found in the cytoplasm. The catalysed reaction is L-threonine + NAD(+) = (2S)-2-amino-3-oxobutanoate + NADH + H(+). It participates in amino-acid degradation; L-threonine degradation via oxydo-reductase pathway; glycine from L-threonine: step 1/2. In terms of biological role, catalyzes the NAD(+)-dependent oxidation of L-threonine to 2-amino-3-ketobutyrate. The sequence is that of L-threonine 3-dehydrogenase from Salmonella arizonae (strain ATCC BAA-731 / CDC346-86 / RSK2980).